We begin with the raw amino-acid sequence, 375 residues long: Succinyl-diaminopimelate desuccinylase (375 aa).

His66 is a binding site for Zn(2+). Asp68 is a catalytic residue. Residue Asp99 participates in Zn(2+) binding. The Proton acceptor role is filled by Glu133. Zn(2+) is bound by residues Glu134, Glu162, and His348.

It belongs to the peptidase M20A family. DapE subfamily. As to quaternary structure, homodimer. The cofactor is Zn(2+). It depends on Co(2+) as a cofactor.

It catalyses the reaction N-succinyl-(2S,6S)-2,6-diaminopimelate + H2O = (2S,6S)-2,6-diaminopimelate + succinate. The protein operates within amino-acid biosynthesis; L-lysine biosynthesis via DAP pathway; LL-2,6-diaminopimelate from (S)-tetrahydrodipicolinate (succinylase route): step 3/3. Its function is as follows. Catalyzes the hydrolysis of N-succinyl-L,L-diaminopimelic acid (SDAP), forming succinate and LL-2,6-diaminopimelate (DAP), an intermediate involved in the bacterial biosynthesis of lysine and meso-diaminopimelic acid, an essential component of bacterial cell walls. This is Succinyl-diaminopimelate desuccinylase from Teredinibacter turnerae (strain ATCC 39867 / T7901).